The following is a 67-amino-acid chain: Large ribosomal subunit protein bL35 (67 aa).

Residues 1–16 (MPKMKTKSSAKKRFRV) show a composition bias toward basic residues. Residues 1-24 (MPKMKTKSSAKKRFRVRPGGTVKR) are disordered.

It belongs to the bacterial ribosomal protein bL35 family.

The polypeptide is Large ribosomal subunit protein bL35 (Verminephrobacter eiseniae (strain EF01-2)).